Reading from the N-terminus, the 565-residue chain is Heme/hemopexin transporter protein HuxB (565 aa).

Residues 1–26 form the signal peptide; that stretch reads MKMRPRYSVIASAVSLGFVLSKSVMA. The POTRA domain maps to 73–150; the sequence is FPLTQVQILD…GTVKILLLKG (78 aa).

It belongs to the TPS (TC 1.B.20) family.

The protein resides in the cell outer membrane. Its function is as follows. Likely functions in the release of soluble HxuA from the cell. Probable member of a two partner secretion pathway (TPS) in which it mediates the secretion of HuxA. The polypeptide is Heme/hemopexin transporter protein HuxB (hxuB) (Haemophilus influenzae (strain 86-028NP)).